We begin with the raw amino-acid sequence, 240 residues long: MSFNVIPAIDLKGGKCVQLVQGVPGTEMVSIDDAVEVAAGWVGQGAKTLHIIDLDGAFSGSRKNAYIMEDIVSKFDVDVQVGGGIRDYETAKYLLSLGIDRVILGTAAIKNPDLVRQLADEFGSETVMVSLDSKQGEVVIEGWTESSGKTTNEMGKFFSEIGAGSILYTNVDVEGLLKGVNEDPVRSLVNSVTIPVIASGGVAKIDDLVKIKNTGAAGVVVGSALYKGLFTLREAIDKVS.

Catalysis depends on Asp10, which acts as the Proton acceptor. Asp132 serves as the catalytic Proton donor.

It belongs to the HisA/HisF family.

It localises to the cytoplasm. The enzyme catalyses 1-(5-phospho-beta-D-ribosyl)-5-[(5-phospho-beta-D-ribosylamino)methylideneamino]imidazole-4-carboxamide = 5-[(5-phospho-1-deoxy-D-ribulos-1-ylimino)methylamino]-1-(5-phospho-beta-D-ribosyl)imidazole-4-carboxamide. Its pathway is amino-acid biosynthesis; L-histidine biosynthesis; L-histidine from 5-phospho-alpha-D-ribose 1-diphosphate: step 4/9. This Methanocella arvoryzae (strain DSM 22066 / NBRC 105507 / MRE50) protein is 1-(5-phosphoribosyl)-5-[(5-phosphoribosylamino)methylideneamino] imidazole-4-carboxamide isomerase.